The sequence spans 130 residues: Small ribosomal subunit protein uS9 (130 aa).

This sequence belongs to the universal ribosomal protein uS9 family.

The protein is Small ribosomal subunit protein uS9 of Xanthomonas oryzae pv. oryzae (strain MAFF 311018).